The chain runs to 789 residues: DEAD-box ATP-dependent RNA helicase 28 (789 aa).

The interval 1–152 (MPSSFFFEDA…AEYKPEDATP (152 aa)) is disordered. A coiled-coil region spans residues 13–66 (DELELIRNQEDSSEEDVKEGEAEEHEAGEDEDGEEEYEEEDDDEEEEDEKRKRD). The segment covering 23-60 (DSSEEDVKEGEAEEHEAGEDEDGEEEYEEEDDDEEEED) has biased composition (acidic residues). The span at 83-99 (GEEHARRHTTSIDEKIS) shows a compositional bias: basic and acidic residues. Positions 110-135 (SINEEEEEEEEEEDASDAETDKQEEY) form a coiled coil. Acidic residues predominate over residues 112–127 (NEEEEEEEEEEDASDA). A Q motif motif is present at residues 167 to 195 (DTFMELNLSRPLLRACETLGYKKPTPIQA). In terms of domain architecture, Helicase ATP-binding spans 198–372 (IPLALTGRDL…KLSLNKPLRL (175 aa)). 211–218 (AITGSGKT) is an ATP binding site. The DEAD box signature appears at 320-323 (DEAD). Residues 402–546 (VLLSLCTRTF…SRVIPEQSIV (145 aa)) enclose the Helicase C-terminal domain. 2 coiled-coil regions span residues 563–591 (ISAE…HRDE) and 628–677 (SADR…EDEE). The tract at residues 611 to 789 (AQAEKDSAGN…FKSKARYKRR (179 aa)) is disordered. The span at 628-637 (SADRAEDLKM) shows a compositional bias: basic and acidic residues. Basic residues predominate over residues 638 to 656 (KEKRKREREKNLPRKKRRK). The segment covering 665–678 (EDNEGEEEEEDEEG) has biased composition (acidic residues). 3 stretches are compositionally biased toward basic and acidic residues: residues 691–701 (KKQETDKKGLT), 718–734 (RAID…DKKQ), and 743–761 (PRGE…EKKQ). The span at 772–789 (PRTKSKNSFKSKARYKRR) shows a compositional bias: basic residues.

This sequence belongs to the DEAD box helicase family. DDX27/DRS1 subfamily.

It catalyses the reaction ATP + H2O = ADP + phosphate + H(+). This is DEAD-box ATP-dependent RNA helicase 28 (RH28) from Arabidopsis thaliana (Mouse-ear cress).